Consider the following 247-residue polypeptide: Fasciclin-like arabinogalactan protein 13 (247 aa).

An N-terminal signal peptide occupies residues 1 to 25; sequence MATTPLLLLLLTAVFLSTEITAQRA. The FAS1 domain occupies 34-179; the sequence is PINITAILEK…LAVYVVDMVL (146 aa). Asn36, Asn55, Asn68, Asn141, and Asn150 each carry an N-linked (GlcNAc...) asparagine glycan. Residues 189–228 are disordered; that stretch reads KISPMAPPPKSKSPDVSDDSESSKKAAAPSESEKSGSGEM. Gly224 carries GPI-anchor amidated glycine lipidation. A propeptide spans 225–247 (removed in mature form); the sequence is SGEMNTGLGLGLGLVVLCLKFLL.

The protein belongs to the fasciclin-like AGP family.

Its subcellular location is the cell membrane. Functionally, may be a cell surface adhesion protein. The polypeptide is Fasciclin-like arabinogalactan protein 13 (FLA13) (Arabidopsis thaliana (Mouse-ear cress)).